The primary structure comprises 794 residues: Histone-lysine N-methyltransferase, H3 lysine-9 specific SUVH5 (794 aa).

2 disordered regions span residues 187 to 210 and 254 to 276; these read VGRD…KRSI and SPVK…KNSE. The span at 194–203 shows a compositional bias: polar residues; sequence NMGSKFSKNG. Residues 258-276 show a composition bias toward basic and acidic residues; sequence PSEKRNGDYGEGSMRKNSE. Positions 365-515 constitute a YDG domain; it reads GTVPGVEVGD…KLVFKFKLRR (151 aa). Residues 585–644 form the Pre-SET domain; the sequence is KSCGCTNGCSKSKNCACIVKNGGKIPYYDGAIVEIKPLVYECGPHCKCPPSCNMRVSQHG. An SET domain is found at 647–764; sequence IKLEIFKTES…PLQELSYDYN (118 aa). Residues 778–794 enclose the Post-SET domain; it reads KKKFCYCGSAECSGRLY.

It belongs to the class V-like SAM-binding methyltransferase superfamily. Histone-lysine methyltransferase family. Suvar3-9 subfamily. As to expression, expressed in leaves stems and flowers.

It localises to the nucleus. It is found in the chromosome. Its subcellular location is the centromere. The catalysed reaction is N(6)-methyl-L-lysyl(9)-[histone H3] + S-adenosyl-L-methionine = N(6),N(6)-dimethyl-L-lysyl(9)-[histone H3] + S-adenosyl-L-homocysteine + H(+). It catalyses the reaction L-lysyl(9)-[histone H3] + S-adenosyl-L-methionine = N(6)-methyl-L-lysyl(9)-[histone H3] + S-adenosyl-L-homocysteine + H(+). In terms of biological role, histone methyltransferase. Methylates 'Lys-9' of histone H3. H3 'Lys-9' methylation represents a specific tag for epigenetic transcriptional repression. The chain is Histone-lysine N-methyltransferase, H3 lysine-9 specific SUVH5 (SUVH5) from Arabidopsis thaliana (Mouse-ear cress).